Consider the following 245-residue polypeptide: Replicative helicase loader DnaC (245 aa).

This sequence belongs to the DnaC family. In terms of assembly, the helix loader is a DnaB(6):DnaC(6) complex with a crack opening large enough to allow ssDNA into the central cavity.

The enzyme catalyses ATP + H2O = ADP + phosphate + H(+). Functionally, required to load the replicative helix DnaB onto single-stranded (ss)DNA, to initiate chromosomal replication. DnaC alters the inter-domain and inter-subunit interactions of DnaB, inducing an open ring conformation that allows ssDNA to access the interior of the DnaB(6):DnaC(6) ring. Has ATPase activity only in the presence of DnaB and ssDNA. ssDNA binds to the central pore in the DnaB(6):DnaC(6) complex, making contacts with both subunits. It forms, in concert with DnaB protein and other prepriming proteins DnaT, N, N', N'' a prepriming protein complex on the specific site of the template DNA recognized by protein N'. In Escherichia coli O157:H7, this protein is Replicative helicase loader DnaC (dnaC).